Here is a 126-residue protein sequence, read N- to C-terminus: Protein ApaG (126 aa).

Residues 2-126 (SALDDSIRVE…FRLALPGLLH (125 aa)) form the ApaG domain.

This is Protein ApaG from Shewanella sp. (strain MR-4).